Consider the following 364-residue polypeptide: Chorismate synthase (364 aa).

The tract at residues 41–60 is disordered; sequence MQHDLDRRRPGTSRYTTARR. NADP(+) contacts are provided by Arg48 and Arg54. FMN is bound by residues 125-127, 238-239, Gly278, 293-297, and Arg319; these read RSS, NA, and KPTSS.

Belongs to the chorismate synthase family. In terms of assembly, homotetramer. FMNH2 is required as a cofactor.

It carries out the reaction 5-O-(1-carboxyvinyl)-3-phosphoshikimate = chorismate + phosphate. It functions in the pathway metabolic intermediate biosynthesis; chorismate biosynthesis; chorismate from D-erythrose 4-phosphate and phosphoenolpyruvate: step 7/7. Catalyzes the anti-1,4-elimination of the C-3 phosphate and the C-6 proR hydrogen from 5-enolpyruvylshikimate-3-phosphate (EPSP) to yield chorismate, which is the branch point compound that serves as the starting substrate for the three terminal pathways of aromatic amino acid biosynthesis. This reaction introduces a second double bond into the aromatic ring system. This chain is Chorismate synthase, found in Shewanella baltica (strain OS185).